The following is a 179-amino-acid chain: Inner membrane-spanning protein YciB (179 aa).

The next 5 membrane-spanning stretches (helical) occupy residues 22–42, 50–70, 76–96, 121–141, and 149–169; these read IYAATSALIVATAIVLIYSWV, MALITFVLVAVFGGLTLFFHN, WKVTVIYALFAGALLISQWVM, LAWALFFIVCGLANIYIAFWL, and FKVFGLTALTLIFTLLSGVYI.

This sequence belongs to the YciB family.

It localises to the cell inner membrane. Functionally, plays a role in cell envelope biogenesis, maintenance of cell envelope integrity and membrane homeostasis. This is Inner membrane-spanning protein YciB from Salmonella dublin (strain CT_02021853).